Consider the following 1331-residue polypeptide: Beta-mannanase/endoglucanase A (1331 aa).

The first 41 residues, M1–S41, serve as a signal peptide directing secretion. Residues N42–S325 form a catalytic (mannanase) region. The Proton donor role is filled by E162. The Nucleophile role is filled by E257. 3 disordered regions span residues N319 to T363, P515 to T566, and E717 to T780. Residues T323–P335 are compositionally biased toward low complexity. The CBM3 1 domain maps to T363 to S516. 2 stretches are compositionally biased toward pro residues: residues A521–T541 and T551–V561. Residues T566–S719 enclose the CBM3 2 domain. Residues T721–P735 show a composition bias toward low complexity. Composition is skewed to pro residues over residues T736–T756 and T766–T780. A catalytic (endoglucanase) region spans residues I781 to V1331.

It in the N-terminal section; belongs to the glycosyl hydrolase 5 (cellulase A) family. The protein in the C-terminal section; belongs to the glycosyl hydrolase 44 (cellulase J) family.

The enzyme catalyses Random hydrolysis of (1-&gt;4)-beta-D-mannosidic linkages in mannans, galactomannans and glucomannans.. The catalysed reaction is Endohydrolysis of (1-&gt;4)-beta-D-glucosidic linkages in cellulose, lichenin and cereal beta-D-glucans.. Degradation of hemicelluloses, the second most abundant polysaccharides in nature. Contains two catalytic domains with mannanase and endoglucanase activities. This is Beta-mannanase/endoglucanase A (manA) from Caldicellulosiruptor saccharolyticus (Caldocellum saccharolyticum).